Here is a 316-residue protein sequence, read N- to C-terminus: Transcription factor MafB (316 aa).

Disordered regions lie at residues 40–78 (PDRA…SPTE) and 116–204 (HQMP…EDRF). Residues 55–77 (SVSSTPISTPCSSVPSSPSFSPT) show a composition bias toward low complexity. 2 stretches are compositionally biased toward basic residues: residues 130–144 (GHHH…HQNH) and 160–172 (QHPH…HHHQ). Low complexity predominate over residues 177-198 (PSGSSSSSQQLQNSHQQHQNSS). The segment at 231-256 (RLKQKRRTLKNRGYAQSCRFKRVQQK) is basic motif. The bZIP domain maps to 231-294 (RLKQKRRTLK…DAYKIKCEKL (64 aa)). Residues 259–280 (LENEKTQLIQQVEQLKLEVSRL) are leucine-zipper.

Belongs to the bZIP family. Maf subfamily. In terms of assembly, homodimer or heterodimer with other bHLH-Zip transcription factors. Binds DNA as a homodimer or a heterodimer.

Its subcellular location is the nucleus. In terms of biological role, acts as a transcriptional activator or repressor. Implicated in the regulation of cell-type specific gene expression and play a role in inductive events during lens development. This is Transcription factor MafB (mafb) from Xenopus tropicalis (Western clawed frog).